A 163-amino-acid chain; its full sequence is MVFVKTLHRTLFLEVAANEDVLSIKQKIEAAEGIPAEEQRLCYAGRQLEDSDCGIDSEATIYVNLELLGGAKKRKKKVYTTPKKNKRKPKKVKLAVLKYYKIDENGKITRLRKECQQPSCGGGVFMAQHANRHYCGRCHDTLVVDTATAAATSGEKGGKKGKK.

A Ubiquitin-like domain is found at 1–70 (MVFVKTLHRT…IYVNLELLGG (70 aa)). G70 participates in a covalent cross-link: Glycyl lysine isopeptide (Gly-Lys) (interchain with K-? in acceptor proteins). The C4-type zinc finger occupies 115-138 (CQQPSCGGGVFMAQHANRHYCGRC).

This sequence in the N-terminal section; belongs to the ubiquitin family. It in the C-terminal section; belongs to the eukaryotic ribosomal protein eS31 family.

This chain is Ubiquitin-like protein 1-ribosomal protein eS31 fusion protein, found in Caenorhabditis elegans.